The chain runs to 461 residues: 26S proteasome regulatory subunit 8 (461 aa).

185–192 (GPPGTGKT) lines the ATP pocket.

Belongs to the AAA ATPase family.

Its subcellular location is the cytoplasm. It is found in the nucleus. Its function is as follows. The 26S proteasome is involved in the ATP-dependent degradation of ubiquitinated proteins. The regulatory (or ATPase) complex confers ATP dependency and substrate specificity to the 26S complex. In Xenopus laevis (African clawed frog), this protein is 26S proteasome regulatory subunit 8 (psmc5).